The following is a 472-amino-acid chain: 2-oxoisovalerate dehydrogenase subunit alpha 1, mitochondrial (472 aa).

Residues 1-56 constitute a mitochondrion transit peptide; it reads MAIWFARSKTLVSSLRHNLNLSTILIKRDYSHRPIFYTTSQLSSTAYLSPFGSLRH. 185–187 contributes to the thiamine diphosphate binding site; sequence QYR. Residues serine 234, threonine 239, and glutamine 240 each contribute to the K(+) site.

It belongs to the BCKDHA family. Heterotetramer of alpha and beta chains. Thiamine diphosphate is required as a cofactor.

The protein resides in the mitochondrion matrix. The catalysed reaction is N(6)-[(R)-lipoyl]-L-lysyl-[protein] + 3-methyl-2-oxobutanoate + H(+) = N(6)-[(R)-S(8)-2-methylpropanoyldihydrolipoyl]-L-lysyl-[protein] + CO2. In terms of biological role, the branched-chain alpha-keto dehydrogenase complex catalyzes the overall conversion of alpha-keto acids to acyl-CoA and CO(2). It contains multiple copies of three enzymatic components: branched-chain alpha-keto acid decarboxylase (E1), lipoamide acyltransferase (E2) and lipoamide dehydrogenase (E3). Required during sugar starvation. This Arabidopsis thaliana (Mouse-ear cress) protein is 2-oxoisovalerate dehydrogenase subunit alpha 1, mitochondrial.